The sequence spans 130 residues: Small ribosomal subunit protein uS9 (130 aa).

It belongs to the universal ribosomal protein uS9 family.

The chain is Small ribosomal subunit protein uS9 from Aeromonas hydrophila subsp. hydrophila (strain ATCC 7966 / DSM 30187 / BCRC 13018 / CCUG 14551 / JCM 1027 / KCTC 2358 / NCIMB 9240 / NCTC 8049).